A 993-amino-acid polypeptide reads, in one-letter code: DNA-binding protein SMUBP-2 (993 aa).

At Ala-2 the chain carries N-acetylalanine. ATP contacts are provided by residues 213–220, Gln-402, Tyr-441, and Glu-570; that span reads GPPGTGKT. Positions 637–783 are SS DNA-binding; that stretch reads TAFEYLDDIV…KARHITVSRR (147 aa). Disordered regions lie at residues 650 to 723, 765 to 815, and 837 to 872; these read YTHE…GPDR, LRHD…EPVT, and RQQS…KGPV. Composition is skewed to polar residues over residues 667–683 and 703–716; these read PSTS…SGQE and HVQS…NGSD. The R3H domain maps to 721–784; it reads PDRTEHFRAT…ARHITVSRRS (64 aa). Residues 765–775 show a composition bias toward basic and acidic residues; it reads LRHDSTGEGKA. Residues 784-794 show a composition bias toward low complexity; that stretch reads SPASSGSVAPQ. Phosphoserine occurs at positions 797 and 800. Residues 837–847 show a composition bias toward polar residues; it reads RQQSSQAQTAK. The Nuclear localization signal motif lies at 862–866; sequence KKKKK. The AN1-type; degenerate zinc finger occupies 889–938; that stretch reads VKADNTCSFSKCSVSTTTLGQFCMHCSHRYYLSHHLPEIHGCGEKARAHA. Zn(2+) contacts are provided by Cys-911, Cys-914, His-928, and Cys-930. The disordered stretch occupies residues 953 to 993; it reads GTKDRALDPAKRAQLQRRLDKKLGELSSQRTSRKKEKERGT. A compositionally biased stretch (basic and acidic residues) spans 954 to 976; that stretch reads TKDRALDPAKRAQLQRRLDKKLG.

The protein belongs to the DNA2/NAM7 helicase family. As to quaternary structure, homooligomer. Interacts with RUVBL1. Interacts with RUVBL2. Interacts with GTF3C1. Interacts with ABT1. Interacts with ribosomes. In all tissues examined.

The protein localises to the nucleus. The protein resides in the cytoplasm. It is found in the cell projection. It localises to the axon. It carries out the reaction ATP + H2O = ADP + phosphate + H(+). Functionally, 5' to 3' helicase that unwinds RNA and DNA duplexes in an ATP-dependent reaction. Specific to 5'-phosphorylated single-stranded guanine-rich sequences. May play a role in RNA metabolism, ribosome biogenesis or initiation of translation. May play a role in regulation of transcription. Interacts with tRNA-Tyr. In Mus musculus (Mouse), this protein is DNA-binding protein SMUBP-2 (Ighmbp2).